Reading from the N-terminus, the 610-residue chain is Phosphoenolpyruvate carboxykinase [GTP] (610 aa).

Substrate-binding positions include Arg82 and 221-223 (YGG). Residues Lys230 and His250 each contribute to the Mn(2+) site. Substrate is bound at residue Ser272. 273–278 (ACGKTN) lines the GTP pocket. Residue Cys274 is part of the active site. Asp297 contributes to the Mn(2+) binding site. A substrate-binding site is contributed by 387 to 389 (NSR). Residues Arg389, Arg420, and 515 to 518 (FGDN) contribute to the GTP site.

The protein belongs to the phosphoenolpyruvate carboxykinase [GTP] family. As to quaternary structure, monomer. Mn(2+) is required as a cofactor.

It is found in the cytoplasm. The catalysed reaction is oxaloacetate + GTP = phosphoenolpyruvate + GDP + CO2. It participates in carbohydrate biosynthesis; gluconeogenesis. In terms of biological role, catalyzes the conversion of oxaloacetate (OAA) to phosphoenolpyruvate (PEP), the rate-limiting step in the metabolic pathway that produces glucose from lactate and other precursors derived from the citric acid cycle. The chain is Phosphoenolpyruvate carboxykinase [GTP] from Corynebacterium glutamicum (strain R).